A 271-amino-acid polypeptide reads, in one-letter code: Carboxy-terminal domain RNA polymerase II polypeptide A small phosphatase 2 (271 aa).

Serine 5 is subject to Phosphoserine. Residues 97-255 (EDQGRICVVI…LNLIPIFEEL (159 aa)) form the FCP1 homology domain. Residue aspartate 107 is the 4-aspartylphosphate intermediate of the active site. Aspartate 107, aspartate 109, and asparagine 218 together coordinate Mg(2+). Aspartate 109 (proton donor) is an active-site residue.

Monomer. Interacts with REST. Requires Mg(2+) as cofactor. As to expression, expression is restricted to non-neuronal tissues. Highest expression in pancreas and lowest in liver.

The protein localises to the nucleus. The enzyme catalyses O-phospho-L-seryl-[protein] + H2O = L-seryl-[protein] + phosphate. It catalyses the reaction O-phospho-L-threonyl-[protein] + H2O = L-threonyl-[protein] + phosphate. In terms of biological role, preferentially catalyzes the dephosphorylation of 'Ser-5' within the tandem 7 residue repeats in the C-terminal domain (CTD) of the largest RNA polymerase II subunit POLR2A. Negatively regulates RNA polymerase II transcription, possibly by controlling the transition from initiation/capping to processive transcript elongation. Recruited by REST to neuronal genes that contain RE-1 elements, leading to neuronal gene silencing in non-neuronal cells. May contribute to the development of sarcomas. The protein is Carboxy-terminal domain RNA polymerase II polypeptide A small phosphatase 2 (CTDSP2) of Homo sapiens (Human).